Reading from the N-terminus, the 230-residue chain is RING finger protein 141 (230 aa).

The N-myristoyl glycine moiety is linked to residue Gly2. The segment at Cys155–Arg192 adopts an RING-type zinc-finger fold.

The protein localises to the membrane. Functionally, may be involved in spermatogenesis. The chain is RING finger protein 141 (RNF141) from Bos taurus (Bovine).